A 417-amino-acid chain; its full sequence is Oxidoreductase phnG (417 aa).

Residues 16–20 (GGSYA), R61, and D317 contribute to the 6-hydroxy-FAD site.

This sequence belongs to the FAD-dependent oxidoreductase family. The cofactor is 6-hydroxy-FAD.

It carries out the reaction deoxyherqueinone + NADPH + O2 + H(+) = herqueinone + NADP(+) + H2O. It participates in secondary metabolite biosynthesis. In terms of biological role, oxidoreductase; part of the gene cluster that mediates the biosynthesis of phenalenones such as herqueinone, compounds that have been reported to treat tumors, bacterial infections and/or mycoses, and rheumatic diseases. The non-reducing polyketide synthase phnA synthesizes the heptaketide backbone and cyclizes it into the angular, hemiketal-containing naphtho-gamma-pyrone prephenalenone. The product template (PT) domain of phnA catalyzes only the C4-C9 aldol condensation, which is unprecedented among known PT domains. The transformation of prephenalenone to phenalenones requires an FAD-dependent monooxygenase phnB, which catalyzes the C2 aromatic hydroxylation of prephenalenone and ring opening of the gamma-pyrone ring simultaneously. Subsequent intramolecular deprotonation of C3 phenolic oxygen accelerates phenalenone ring closure to yield the tricyclic phenalenone core with a C2 hydroxylation. The prenyltransferase phnF further catalyzes reverse C-prenylation of phenalenone by direct electrophilic substitution at C6, or possibly via first a forward O-prenylation of a neighboring phenol in phenalenone, followed by a Claisen rearrangement. The hydroalkoxylation enzyme phnH catalyzes the 5-exo-trig cyclization via acid catalysis after the spontaneous deprotonation of 7-OH, which leads to the formation of the dihydrobenzofuran atrovenetin. Atrovenetin is further converted to deoxyherqueinone by the O-methyltransferase phnC which can methylate C2-OH to stabilize the northern portion of the phenalenone core. Finally, the oxidoreductase phnG converts deoxyherqueinone to herqueinone via C6 hydroxylation. The sequence is that of Oxidoreductase phnG from Penicillium herquei.